Reading from the N-terminus, the 148-residue chain is Small ribosomal subunit protein eS19 (148 aa).

This sequence belongs to the eukaryotic ribosomal protein eS19 family.

This chain is Small ribosomal subunit protein eS19 (rps19), found in Dictyostelium discoideum (Social amoeba).